A 66-amino-acid chain; its full sequence is Moricin-2 (66 aa).

The first 24 residues, 1-24 (MNILKLFFVFIVAMSLVSCSTAAP), serve as a signal peptide directing secretion.

Expressed in fat body and to a lesser extent in hemocyte and Malpighian tubules.

It is found in the secreted. Its function is as follows. Has antibacterial activity against Gram-positive and Gram-negative bacteria. Probably acts by disturbing membrane functions with its amphipathic structure. This chain is Moricin-2 (MOR2), found in Bombyx mori (Silk moth).